The primary structure comprises 2126 residues: Serine/threonine-protein kinase WNK1 (2126 aa).

2 disordered regions span residues Met-1–Arg-80 and Leu-93–Asp-202. Ser-17 carries the phosphoserine modification. Basic and acidic residues predominate over residues Arg-48 to Arg-64. Thr-58 is modified (phosphothreonine). Composition is skewed to low complexity over residues Pro-101–Gln-111 and Val-127–Pro-141. Ser-165 and Ser-172 each carry phosphoserine. The 259-residue stretch at Leu-221–Phe-479 folds into the Protein kinase domain. An ATP-binding site is contributed by Ser-231. Phe-283 and Leu-299 together coordinate chloride. ATP-binding positions include Thr-301–Met-304 and Lys-351. Asp-368 serves as the catalytic Proton acceptor. Positions 369 and 371 each coordinate chloride. Residues Ser-378 and Ser-382 each carry the phosphoserine; by autocatalysis modification. Positions Glu-488–Ala-555 are autoinhibitory domain. Residues Gln-573–Ser-588 show a composition bias toward basic and acidic residues. The disordered stretch occupies residues Gln-573–Lys-865. A compositionally biased stretch (polar residues) spans Asn-593–Ile-614. The segment covering Pro-615–Thr-626 has biased composition (low complexity). An interaction with KLHL3 region spans residues Glu-629–Gln-639. Composition is skewed to polar residues over residues His-638–His-682, Thr-695–Pro-705, and Ser-713–Ser-733. Residues Gln-734–Pro-746 are compositionally biased toward low complexity. Positions Pro-750–Ser-789 are enriched in polar residues. The span at Pro-793–Ser-823 shows a compositional bias: low complexity. Over residues Ser-826–Ser-836 the composition is skewed to polar residues. The segment covering Thr-844–Lys-865 has biased composition (basic residues). The RFXV motif 1 signature appears at Arg-1003–Val-1006. Ser-1007 carries the phosphoserine modification. Disordered stretches follow at residues Gly-1474–Thr-1507 and Ile-1557–Ser-1595. Over residues Ser-1477 to Gly-1496 the composition is skewed to low complexity. The span at Ser-1567–Lys-1583 shows a compositional bias: polar residues. Residues Arg-1604 to Val-1607 carry the RFXV motif 2 motif. The tract at residues Thr-1610 to Thr-1695 is disordered. Residues Asp-1613–His-1629 are compositionally biased toward basic and acidic residues. Low complexity predominate over residues Ser-1632–Val-1650. Short sequence motifs (RFXV motif) lie at residues Arg-1690–Val-1693 and Arg-1702–Val-1705. The span at Glu-1709–Gly-1719 shows a compositional bias: basic and acidic residues. Disordered stretches follow at residues Glu-1709 to Lys-1783, Val-1856 to Ser-1940, and Ser-1952 to Phe-1990. At Ser-1723 the chain carries Phosphoserine. Residues Pro-1738–Glu-1747 are compositionally biased toward basic and acidic residues. 6 positions are modified to phosphoserine: Ser-1755, Ser-1756, Ser-1771, Ser-1773, Ser-1776, and Ser-1865. Residues Gly-1866–Lys-1878 show a composition bias toward basic residues. The segment covering Ser-1879–Ser-1889 has biased composition (low complexity). Residues Pro-1890–Ser-1940 show a composition bias toward polar residues. Positions Gly-1957 to Ala-1981 are enriched in low complexity. Residues Ser-1985–Ala-2005 are amphipathic alpha-helix. Residues Ser-2014 and Ser-2030 each carry the phosphoserine modification. Residues Pro-2076–Pro-2097 are disordered. Residues Ser-2114 and Ser-2116 each carry the phosphoserine modification.

The protein belongs to the protein kinase superfamily. Ser/Thr protein kinase family. WNK subfamily. In terms of assembly, interacts with WNK3. Interacts with WNK4; inhibiting the activity of WNK4. Interacts with SGK1; promoting its activation. Associates with the mTORC2 complex. Interacts with UVRAG. Interacts (via amphipathic alpha-helix region) with EMC2; promoting the ER membrane protein complex assembly. As to quaternary structure, interacts with isoform 1; inhibiting isoform 1 activity. It depends on Mg(2+) as a cofactor. Post-translationally, autophosphorylated at Ser-378 and Ser-382, promoting its activity. Autophosphorylation at Ser-382 is inhibited by intracellular calcium. Phosphorylation at Thr-58 increases ability to activate SGK1. In terms of processing, ubiquitinated by the BCR(KLHL3) complex, leading to its degradation. Also ubiquitinated by the BCR(KLHL2) complex. May be O-glycosylated.

The protein resides in the cytoplasm. It is found in the nucleus. The protein localises to the cytoskeleton. It localises to the spindle. It catalyses the reaction L-seryl-[protein] + ATP = O-phospho-L-seryl-[protein] + ADP + H(+). It carries out the reaction L-threonyl-[protein] + ATP = O-phospho-L-threonyl-[protein] + ADP + H(+). Its activity is regulated as follows. Activated in response to hyperosmotic stress: cell shrinkage promotes formation of a membraneless compartment that concentrates WNK1 with its substrates, OXSR1/OSR1 and STK39/SPAK. Activation requires autophosphorylation of Ser-382 and, to a lower extent, Ser-378. Autophosphorylation and subsequent activation is inhibited by increases in intracellular ionic strength: Cl(-) potently inhibits WNK1 kinase activity via direct binding. Also inhibited by K(+) ions. Inhibited by Compound 12 ((5-Chloro-2-(2-((methyl-d3)amino)thiazol-4-yl)- pyridin-4-yl)(4-(4-chlorobenzyl)piperazin-1-yl)methanone). In terms of biological role, serine/threonine-protein kinase component of the WNK1-SPAK/OSR1 kinase cascade, which acts as a key regulator of blood pressure and regulatory volume increase by promoting ion influx. WNK1 mediates regulatory volume increase in response to hyperosmotic stress by acting as a molecular crowding sensor, which senses cell shrinkage and mediates formation of a membraneless compartment by undergoing liquid-liquid phase separation. The membraneless compartment concentrates WNK1 with its substrates, OXSR1/OSR1 and STK39/SPAK, promoting WNK1-dependent phosphorylation and activation of downstream kinases OXSR1/OSR1 and STK39/SPAK. Following activation, OXSR1/OSR1 and STK39/SPAK catalyze phosphorylation of ion cotransporters SLC12A1/NKCC2, SLC12A2/NKCC1, SLC12A5/KCC2 and SLC12A6/KCC3, regulating their activity. Phosphorylation of Na-K-Cl cotransporters SLC12A2/NKCC1 and SLC12A2/NKCC1 promote their activation and ion influx; simultaneously, phosphorylation of K-Cl cotransporters SLC12A5/KCC2 and SLC12A6/KCC3 inhibit their activity, blocking ion efflux. Also acts as a regulator of angiogenesis in endothelial cells. Also acts independently of the WNK1-SPAK/OSR1 kinase cascade by catalyzing phosphorylation of other substrates, such as SYT2, PCF11 and NEDD4L. Mediates phosphorylation of SYT2, regulating SYT2 association with phospholipids and membrane-binding. Regulates mRNA export in the nucleus by mediating phosphorylation of PCF11, thereby decreasing the association between PCF11 and POLR2A/RNA polymerase II and promoting mRNA export to the cytoplasm. Acts as a negative regulator of autophagy. Required for the abscission step during mitosis, independently of the WNK1-SPAK/OSR1 kinase cascade. WNK1 may also play a role in actin cytoskeletal reorganization. Also acts as a scaffold protein independently of its protein kinase activity: negatively regulates cell membrane localization of various transporters and channels, such as SLC4A4, SLC26A6, SLC26A9, TRPV4 and CFTR. Involved in the regulation of epithelial Na(+) channel (ENaC) by promoting activation of SGK1 in a kinase-independent manner. Probably activates SGK1 by acting as a scaffold protein that promotes the recruitment of SGK1 to the mTORC2 complex in response to chloride, leading to mTORC2-dependent phosphorylation and activation of SGK1. Acts as an assembly factor for the ER membrane protein complex independently of its protein kinase activity: associates with EMC2 in the cytoplasm via its amphipathic alpha-helix, and prevents EMC2 ubiquitination and subsequent degradation, thereby promoting EMC2 stabilization. Functionally, kinase-defective isoform specifically expressed in kidney, which acts as a dominant-negative regulator of the longer isoform 1. Does not directly inhibit WNK4 and has no direct effect on sodium and chloride ion transport. Down-regulates sodium-chloride cotransporter activity indirectly by inhibiting isoform 1, it associates with isoform 1 and attenuates its kinase activity. In kidney, may play an important role regulating sodium and potassium balance. Its function is as follows. Kinase-defective isoform produced by alternative promoter usage and alternative splicing. The protein is Serine/threonine-protein kinase WNK1 of Rattus norvegicus (Rat).